We begin with the raw amino-acid sequence, 693 residues long: Glycine--tRNA ligase beta subunit (693 aa).

It belongs to the class-II aminoacyl-tRNA synthetase family. In terms of assembly, tetramer of two alpha and two beta subunits.

It is found in the cytoplasm. It catalyses the reaction tRNA(Gly) + glycine + ATP = glycyl-tRNA(Gly) + AMP + diphosphate. In Natranaerobius thermophilus (strain ATCC BAA-1301 / DSM 18059 / JW/NM-WN-LF), this protein is Glycine--tRNA ligase beta subunit.